A 225-amino-acid polypeptide reads, in one-letter code: Ribosome maturation factor RimM (225 aa).

Positions 144-225 (ADEFYWVDLI…RIVVDWEADY (82 aa)) constitute a PRC barrel domain.

This sequence belongs to the RimM family. In terms of assembly, binds ribosomal protein uS19.

It is found in the cytoplasm. Functionally, an accessory protein needed during the final step in the assembly of 30S ribosomal subunit, possibly for assembly of the head region. Essential for efficient processing of 16S rRNA. May be needed both before and after RbfA during the maturation of 16S rRNA. It has affinity for free ribosomal 30S subunits but not for 70S ribosomes. The polypeptide is Ribosome maturation factor RimM (Burkholderia orbicola (strain AU 1054)).